Consider the following 255-residue polypeptide: MKSITTASFALILFGVGAASADHASRVLVLGGGAVPSGTKTYTTGIRATIDGDSFCGGSLISPTHVLTTTACIGYTKPANWVSVGTHYLNGTHDGEQIKVVSAQNHTGFNSTSGSYDVALLRLERPSKFMPVKLPAADDSDVIPGMRSSLVGWGYTSYPNGTKAYELQGVGLEVWSNTDCARIYSLDDTMVCAGGGVGKDSCNGDTGGPLIKERGPGDEDDIVVGLVSLGSRMWCGVPRSVFACVESLGMDQLGH.

The signal sequence occupies residues 1–21; the sequence is MKSITTASFALILFGVGAASA. One can recognise a Peptidase S1 domain in the interval 29-255; sequence VLGGGAVPSG…ESLGMDQLGH (227 aa). Cys56 and Cys72 form a disulfide bridge. Residues Asn90, Asn105, Asn110, and Asn160 are each glycosylated (N-linked (GlcNAc...) asparagine). 2 disulfides stabilise this stretch: Cys180–Cys192 and Cys202–Cys235.

The protein belongs to the peptidase S1 family. Forms an apoplastic complex with host endoglucanases in tomato leaves during P.infestans infection.

Its subcellular location is the secreted. In terms of biological role, secreted effector that suppresses host plant glucan elicitor-mediated defense responses. Targets host endoglucanases and inhibits the endoglucanase-mediated release of elicitor-active glucan oligosaccharides from P.infestans cell walls. The chain is Glucanase inhibitor protein 4 from Phytophthora infestans (Potato late blight agent).